Consider the following 59-residue polypeptide: Alpha-conotoxin CIA (59 aa).

Positions 1 to 16 are cleaved as a signal peptide; that stretch reads MFTVFLLVVLTITVVS. A propeptide spanning residues 17–42 is cleaved from the precursor; sequence FPSDRASDGRDDEAKDERSDMYKSKR. Disulfide bonds link cysteine 46/cysteine 51 and cysteine 47/cysteine 57. Cysteine 57 is subject to Cysteine amide.

It belongs to the conotoxin A superfamily. In terms of tissue distribution, expressed by the venom duct.

It localises to the secreted. Alpha-conotoxins act on postsynaptic membranes, they bind to the nicotinic acetylcholine receptors (nAChR) and thus inhibit them. This toxin blocks the rat muscle nAChRs alpha-1-beta-1-gamma-delta (CHRNA1-CHRNB1-CHRNG-CHRND) (IC(50)=5.7 nM) and the rat neuronal nAChR alpha-3-beta-2/CHRNA3-CHRNB2 (IC(50)=2060 nM). In vivo, intramuscular injection into zebrafish produces rapid flaccid paralysis. The chain is Alpha-conotoxin CIA from Conus catus (Cat cone).